Here is a 204-residue protein sequence, read N- to C-terminus: uncharacterized protein (204 aa).

A signal peptide spans 1–24; the sequence is MPINTFCKISLFICALFCSTVTLA.

This is an uncharacterized protein from Pasteurella multocida (strain Pm70).